The chain runs to 576 residues: DNA primase (576 aa).

Residues 40–64 form a CHC2-type zinc finger; it reads CPFHNEKTPSFNVVAKKQFYHCFGC. The 83-residue stretch at 251–333 folds into the Toprim domain; that stretch reads DSIIVVEGYM…GLDAGFIFLP (83 aa). 3 residues coordinate Mg(2+): Glu257, Asp301, and Asp303.

It belongs to the DnaG primase family. Monomer. Interacts with DnaB. Requires Zn(2+) as cofactor. Mg(2+) is required as a cofactor.

The catalysed reaction is ssDNA + n NTP = ssDNA/pppN(pN)n-1 hybrid + (n-1) diphosphate.. Functionally, RNA polymerase that catalyzes the synthesis of short RNA molecules used as primers for DNA polymerase during DNA replication. In Legionella pneumophila, this protein is DNA primase.